A 394-amino-acid polypeptide reads, in one-letter code: MAKEKFDRSKEHANIGTIGHVDHGKTTLTAAIATVLAKNGDTVAQSYDMIDNAPEEKERGITINTAHIEYQTDKRHYAHVDCPGHADYVKNMITGAAQMDGGILVVSAADGPMPQTREHILLSRNVGVPALVVFLNKVDMVDDEELLELVEMEVRDLLSEYDFPGDDVPVIAGSALKALEGDAEYEQKILDLMQAVDDYIPTPERDSDKPFMMPVEDVFSITGRGTVATGRVERGQIKVGEEVEIIGMHETSKTTVTGVEMFRKLLDYAEAGDNIGALLRGVAREDVQRGQVLAAPGSITPHTKFKAEVYVLSKDEGGRHTPFFTNYRPQFYFRTTDVTGVVNLPEGTEMVMPGDNVEMTVELIAPIAIEDGTRFSIREGGRTVGSGVVTEIFE.

One can recognise a tr-type G domain in the interval 10 to 204 (KEHANIGTIG…AVDDYIPTPE (195 aa)). Residues 19–26 (GHVDHGKT) form a G1 region. GTP is bound at residue 19–26 (GHVDHGKT). Thr-26 lines the Mg(2+) pocket. The segment at 60-64 (GITIN) is G2. Residues 81–84 (DCPG) form a G3 region. GTP-binding positions include 81-85 (DCPGH) and 136-139 (NKVD). Residues 136–139 (NKVD) form a G4 region. Residues 174–176 (SAL) are G5.

Belongs to the TRAFAC class translation factor GTPase superfamily. Classic translation factor GTPase family. EF-Tu/EF-1A subfamily. Monomer.

The protein localises to the cytoplasm. The enzyme catalyses GTP + H2O = GDP + phosphate + H(+). In terms of biological role, GTP hydrolase that promotes the GTP-dependent binding of aminoacyl-tRNA to the A-site of ribosomes during protein biosynthesis. This is Elongation factor Tu from Staphylococcus epidermidis (strain ATCC 35984 / DSM 28319 / BCRC 17069 / CCUG 31568 / BM 3577 / RP62A).